Consider the following 331-residue polypeptide: L-lactate dehydrogenase A chain (331 aa).

Residues 29-57 (GMVGMASAISILLKDLCDELAMVDVMEDK) and Arg98 contribute to the NAD(+) site. Residues Arg105, Asn137, and Arg168 each contribute to the substrate site. An NAD(+)-binding site is contributed by Asn137. The active-site Proton acceptor is His192. Position 247 (Thr247) interacts with substrate.

This sequence belongs to the LDH/MDH superfamily. LDH family. In terms of assembly, homotetramer.

It is found in the cytoplasm. It carries out the reaction (S)-lactate + NAD(+) = pyruvate + NADH + H(+). The protein operates within fermentation; pyruvate fermentation to lactate; (S)-lactate from pyruvate: step 1/1. Its function is as follows. Interconverts simultaneously and stereospecifically pyruvate and lactate with concomitant interconversion of NADH and NAD(+). The protein is L-lactate dehydrogenase A chain (ldha) of Paranotothenia magellanica (Maori cod).